A 113-amino-acid polypeptide reads, in one-letter code: Protein AaeX (113 aa).

2 helical membrane passes run 3–23 (LLPV…EMIL) and 43–63 (FVWH…YLIS).

It belongs to the AaeX family.

The protein resides in the cell membrane. This Sodalis glossinidius (strain morsitans) protein is Protein AaeX.